The primary structure comprises 397 residues: Phosphoglycerate kinase (397 aa).

Residues 21–23 (DFN), Arg37, 60–63 (HLGR), Arg119, and Arg152 contribute to the substrate site. ATP is bound by residues Lys203, Gly294, Glu325, and 354-357 (GGDS).

The protein belongs to the phosphoglycerate kinase family. As to quaternary structure, monomer.

It localises to the cytoplasm. The catalysed reaction is (2R)-3-phosphoglycerate + ATP = (2R)-3-phospho-glyceroyl phosphate + ADP. It functions in the pathway carbohydrate degradation; glycolysis; pyruvate from D-glyceraldehyde 3-phosphate: step 2/5. The sequence is that of Phosphoglycerate kinase from Prosthecochloris aestuarii (strain DSM 271 / SK 413).